A 289-amino-acid polypeptide reads, in one-letter code: ATP synthase gamma chain (289 aa).

This sequence belongs to the ATPase gamma chain family. In terms of assembly, F-type ATPases have 2 components, CF(1) - the catalytic core - and CF(0) - the membrane proton channel. CF(1) has five subunits: alpha(3), beta(3), gamma(1), delta(1), epsilon(1). CF(0) has three main subunits: a, b and c.

It localises to the cell inner membrane. In terms of biological role, produces ATP from ADP in the presence of a proton gradient across the membrane. The gamma chain is believed to be important in regulating ATPase activity and the flow of protons through the CF(0) complex. This Anaeromyxobacter dehalogenans (strain 2CP-C) protein is ATP synthase gamma chain.